The sequence spans 212 residues: Peroxiredoxin-like 2A (212 aa).

Residues 3–101 are thioredoxin fold; that stretch reads MWSLGLGAVG…DELGVPLYAV (99 aa). Selenocysteine 74 is a non-standard amino acid (selenocysteine). The Redox-active role is filled by cysteine 77.

The protein belongs to the peroxiredoxin-like PRXL2 family. PRXL2A subfamily. In terms of tissue distribution, expressed in kidney marrow.

It is found in the cytoplasm. Functionally, involved in redox regulation of the cell. Acts as an antioxidant. The protein is Peroxiredoxin-like 2A (prxl2a) of Danio rerio (Zebrafish).